The primary structure comprises 341 residues: Cyanuric acid amidohydrolase (341 aa).

The segment at 1 to 90 is RU A; sequence MAPIEILKFP…HVTFFLRSPG (90 aa). Residues Arg-51 and 71–72 contribute to the substrate site; that span reads SG. The RU B stretch occupies residues 95–229; that stretch reads GLSAAVGHTR…CHILVLASTS (135 aa). Lys-144 is an active-site residue. Residues Arg-176 and 212–213 contribute to the substrate site; that span reads SS. Catalysis depends on Ser-212, which acts as the Nucleophile. The RU C stretch occupies residues 235-341; that stretch reads LHAVSRPMAD…SLCLVYETSI (107 aa). Glu-273 contributes to the Mg(2+) binding site. Residues Arg-300 and 319-320 each bind substrate; that span reads SG. Mg(2+)-binding residues include Ala-322, Gln-325, Gly-326, Pro-327, and Gly-330.

It belongs to the cyclic amide hydrolase (CyAH) family. Homotetramer.

It catalyses the reaction cyanurate + H2O = 1-carboxybiuret + H(+). The protein operates within xenobiotic degradation; atrazine degradation; biuret from cyanurate: step 1/1. Inhibited by barbituric acid. Its function is as follows. Responsible for the hydrolysis of cyanuric acid, an intermediate formed during catabolism of s-triazine based compounds in herbicides such as atrazine and polymers such as melamine. Catalyzes the hydrolytic opening of the s-triazine ring of cyanuric acid (2,4,6-trihydroxy-s-triazine) to yield carbon dioxide and carboxybiuret, which spontaneously decarboxylates to biuret. Only active on cyanuric acid and N-methylisocyanuric acid. This chain is Cyanuric acid amidohydrolase, found in Sarocladium sp.